The sequence spans 420 residues: Glucose-1-phosphate adenylyltransferase 2 (420 aa).

Alpha-D-glucose 1-phosphate is bound by residues tyrosine 109, glycine 175, 190 to 191, and serine 208; that span reads EK.

Belongs to the bacterial/plant glucose-1-phosphate adenylyltransferase family. Homotetramer.

The catalysed reaction is alpha-D-glucose 1-phosphate + ATP + H(+) = ADP-alpha-D-glucose + diphosphate. It participates in glycan biosynthesis; glycogen biosynthesis. Functionally, involved in the biosynthesis of ADP-glucose, a building block required for the elongation reactions to produce glycogen. Catalyzes the reaction between ATP and alpha-D-glucose 1-phosphate (G1P) to produce pyrophosphate and ADP-Glc. The chain is Glucose-1-phosphate adenylyltransferase 2 from Pseudoalteromonas atlantica (strain T6c / ATCC BAA-1087).